The chain runs to 383 residues: ATP phosphoribosyltransferase regulatory subunit (383 aa).

Belongs to the class-II aminoacyl-tRNA synthetase family. HisZ subfamily. Heteromultimer composed of HisG and HisZ subunits.

It localises to the cytoplasm. It participates in amino-acid biosynthesis; L-histidine biosynthesis; L-histidine from 5-phospho-alpha-D-ribose 1-diphosphate: step 1/9. Its function is as follows. Required for the first step of histidine biosynthesis. May allow the feedback regulation of ATP phosphoribosyltransferase activity by histidine. The chain is ATP phosphoribosyltransferase regulatory subunit from Paraburkholderia xenovorans (strain LB400).